A 147-amino-acid chain; its full sequence is uncharacterized protein (147 aa).

2 consecutive 4Fe-4S ferredoxin-type domains span residues 80 to 109 (WYPKIDYNRCKNCEKCISFCPRGVYDAENG) and 110 to 141 (KVVVKYPYSCIVNCNACSIMCCENNAIIFPDE). 8 residues coordinate [4Fe-4S] cluster: cysteine 89, cysteine 92, cysteine 95, cysteine 99, cysteine 119, cysteine 123, cysteine 126, and cysteine 130.

Requires [4Fe-4S] cluster as cofactor.

This is an uncharacterized protein from Methanocaldococcus jannaschii (strain ATCC 43067 / DSM 2661 / JAL-1 / JCM 10045 / NBRC 100440) (Methanococcus jannaschii).